The primary structure comprises 177 residues: Copper-binding regulatory protein cuf2 (177 aa).

The segment at residues 1-40 is a DNA-binding region (copper-fist); that stretch reads MIIIDGKNYACVVCLRGHRGSSCQHQERALIEVRTRGRPL. Zn(2+)-binding residues include Cys-11, Cys-14, Cys-23, and His-25.

Its subcellular location is the nucleus. In Schizosaccharomyces pombe (strain 972 / ATCC 24843) (Fission yeast), this protein is Copper-binding regulatory protein cuf2 (cuf2).